We begin with the raw amino-acid sequence, 106 residues long: Thiosulfate sulfurtransferase GlpE (106 aa).

A Rhodanese domain is found at 16–104 (REQGAVLVDV…WRATYPDETV (89 aa)). Cys64 serves as the catalytic Cysteine persulfide intermediate.

It belongs to the GlpE family.

It is found in the cytoplasm. It catalyses the reaction thiosulfate + hydrogen cyanide = thiocyanate + sulfite + 2 H(+). It carries out the reaction thiosulfate + [thioredoxin]-dithiol = [thioredoxin]-disulfide + hydrogen sulfide + sulfite + 2 H(+). Transferase that catalyzes the transfer of sulfur from thiosulfate to thiophilic acceptors such as cyanide or dithiols. May function in a CysM-independent thiosulfate assimilation pathway by catalyzing the conversion of thiosulfate to sulfite, which can then be used for L-cysteine biosynthesis. This Pseudomonas savastanoi pv. phaseolicola (strain 1448A / Race 6) (Pseudomonas syringae pv. phaseolicola (strain 1448A / Race 6)) protein is Thiosulfate sulfurtransferase GlpE.